The following is a 283-amino-acid chain: Orotidine 5'-phosphate decarboxylase (283 aa).

Residue Lys-97 is the Proton donor of the active site.

It belongs to the OMP decarboxylase family. Type 2 subfamily.

It catalyses the reaction orotidine 5'-phosphate + H(+) = UMP + CO2. It participates in pyrimidine metabolism; UMP biosynthesis via de novo pathway; UMP from orotate: step 2/2. The protein is Orotidine 5'-phosphate decarboxylase of Clostridium botulinum (strain Kyoto / Type A2).